The following is a 325-amino-acid chain: Thiamine-monophosphate kinase (325 aa).

2 residues coordinate Mg(2+): D27 and D44. H51 lines the substrate pocket. Position 73 (D73) interacts with Mg(2+). ATP is bound by residues Y103, 120 to 121 (GD), and R147. Residue D121 participates in Mg(2+) binding. D215 serves as a coordination point for Mg(2+). S217 is a binding site for ATP. D218 is a Mg(2+) binding site. Substrate is bound by residues E264 and Y321.

The protein belongs to the thiamine-monophosphate kinase family.

The catalysed reaction is thiamine phosphate + ATP = thiamine diphosphate + ADP. Its pathway is cofactor biosynthesis; thiamine diphosphate biosynthesis; thiamine diphosphate from thiamine phosphate: step 1/1. Functionally, catalyzes the ATP-dependent phosphorylation of thiamine-monophosphate (TMP) to form thiamine-pyrophosphate (TPP), the active form of vitamin B1. The chain is Thiamine-monophosphate kinase from Bacillus subtilis (strain 168).